The following is an 862-amino-acid chain: Protein SEY1 (862 aa).

The Cytoplasmic portion of the chain corresponds to 1–743; that stretch reads MASNGHFSSV…KRSAIGGITQ (743 aa). Residues 48-301 enclose the GB1/RHD3-type G domain; it reads GFNYHLISVF…IPADGFAVYA (254 aa). 58 to 65 is a GTP binding site; it reads GSQSTGKS. The stretch at 476-500 forms a coiled coil; the sequence is SDYKQELSLFQKDLEKISSQLRKDE. A helical membrane pass occupies residues 744-764; that stretch reads VPLYFYGLLLALGWNEIIAVL. Residues 765–767 are Lumenal-facing; that stretch reads RNP. The helical transmembrane segment at 768-788 threads the bilayer; the sequence is IYFIFLLLIGVGAYVTFRLNL. The Cytoplasmic portion of the chain corresponds to 789–862; that stretch reads WGPMINMAEA…TSDDDNDDDL (74 aa). A disordered region spans residues 818–862; it reads SDSGRQAMAMSGRNARGTEEYEMSSNLKSKGRRTDTSDDDNDDDL.

The protein belongs to the TRAFAC class dynamin-like GTPase superfamily. GB1/RHD3 GTPase family. RHD3 subfamily.

It is found in the endoplasmic reticulum membrane. Cooperates with the reticulon proteins and tubule-shaping DP1 family proteins to generate and maintain the structure of the tubular endoplasmic reticulum network. Has GTPase activity, which is required for its function in ER organization. This chain is Protein SEY1, found in Arthroderma otae (strain ATCC MYA-4605 / CBS 113480) (Microsporum canis).